Reading from the N-terminus, the 183-residue chain is Capsid protein (183 aa).

Residues 136–183 (NAPILSTLPETTVVRRRGRSPRRRTPSPRRRRSESPRRRRSQSRESQC) form a disordered region. Residues 149–176 (VRRRGRSPRRRTPSPRRRRSESPRRRRS) are compositionally biased toward basic residues. Phosphoserine; by host is present on residues Ser155, Ser162, and Ser170. One copy of the 1; half-length repeat lies at 155 to 160 (SPRRRT). The segment at 155–176 (SPRRRTPSPRRRRSESPRRRRS) is 3 X 7 AA repeats of S-P-R-R-R-[PR]-S. Residues 158-175 (RRTPSPRRRRSESPRRRR) carry the Bipartite nuclear localization signal motif. 2 repeat units span residues 162–168 (SPRRRRS) and 170–176 (SPRRRRS). Positions 177-183 (QSRESQC) are RNA binding.

The protein belongs to the orthohepadnavirus core antigen family. Homodimerizes, then multimerizes. Interacts with cytosol exposed regions of viral L glycoprotein present in the reticulum-to-Golgi compartment. Interacts with human FLNB. Phosphorylated form interacts with host importin alpha; this interaction depends on the exposure of the NLS, which itself depends upon genome maturation and/or phosphorylation of the capsid protein. Interacts with host NUP153. In terms of processing, phosphorylated by host SRPK1, SRPK2, and maybe protein kinase C or GAPDH. Phosphorylation is critical for pregenomic RNA packaging. Protein kinase C phosphorylation is stimulated by HBx protein and may play a role in transport of the viral genome to the nucleus at the late step during the viral replication cycle.

The protein localises to the virion. Its subcellular location is the host cytoplasm. In terms of biological role, self assembles to form an icosahedral capsid. Most capsids appear to be large particles with an icosahedral symmetry of T=4 and consist of 240 copies of capsid protein, though a fraction forms smaller T=3 particles consisting of 180 capsid proteins. Entering capsids are transported along microtubules to the nucleus. Phosphorylation of the capsid is thought to induce exposure of nuclear localization signal in the C-terminal portion of the capsid protein that allows binding to the nuclear pore complex via the importin (karyopherin-) alpha and beta. Capsids are imported in intact form through the nuclear pore into the nuclear basket, where it probably binds NUP153. Only capsids that contain the mature viral genome can release the viral DNA and capsid protein into the nucleoplasm. Immature capsids get stuck in the basket. Capsids encapsulate the pre-genomic RNA and the P protein. Pre-genomic RNA is reverse-transcribed into DNA while the capsid is still in the cytoplasm. The capsid can then either be directed to the nucleus, providing more genomes for transcription, or bud through the endoplasmic reticulum to provide new virions. The chain is Capsid protein from Homo sapiens (Human).